Reading from the N-terminus, the 238-residue chain is Sugar fermentation stimulation protein homolog (238 aa).

The protein belongs to the SfsA family.

The polypeptide is Sugar fermentation stimulation protein homolog (Haemophilus influenzae (strain 86-028NP)).